The chain runs to 161 residues: MITVDKWFRINRADTGLCNYWPELSAGTVFKVRELVKECEDDIEPDTGIIEIELSDGKIINIYDKPITYWCLWNTESVENGEIEEVVERTNQVVQKPKADFQGERISYALAKLAAQENNDGYEGNLMQAAAEYIEWLETQISFSDRMIQQYKRLHQMFYNT.

In terms of biological role, plays a role in the inhibition of bacterial toxin-antitoxin system by blocking the action of host Lon protease. This Enterobacteria phage T4 (Bacteriophage T4) protein is Host protease inhibitor (pin).